We begin with the raw amino-acid sequence, 585 residues long: ADP-ribosylation factor-binding protein GGA2 (585 aa).

Residues 33-169 (ACRMSLAEPD…LLKYKGYAFP (137 aa)) enclose the VHS domain. Residues Lys-180 and Lys-287 each participate in a glycyl lysine isopeptide (Lys-Gly) (interchain with G-Cter in ubiquitin) cross-link. Residues 196-321 (EIAQAAKLEE…LLEKFNLLKN (126 aa)) form the GAT domain. Residues 358–378 (LDEAPSQGNNNTNGTGTPAAA) are disordered. The span at 365-374 (GNNNTNGTGT) shows a compositional bias: low complexity. One can recognise a GAE domain in the interval 466 to 581 (TTTAPARTLV…TQAEETAVFT (116 aa)).

Binds to ARF1 and ARF2.

It is found in the golgi apparatus. It localises to the trans-Golgi network. Functionally, may play a role in the regulation of membrane traffic through the trans-Golgi network. The protein is ADP-ribosylation factor-binding protein GGA2 (GGA2) of Saccharomyces cerevisiae (strain ATCC 204508 / S288c) (Baker's yeast).